Consider the following 257-residue polypeptide: Zinc uptake system ATP-binding protein ZurA (257 aa).

The region spanning Ile5–Glu241 is the ABC transporter domain. Gly37–Ser44 provides a ligand contact to ATP.

The protein belongs to the ABC transporter superfamily.

Functionally, involved in a zinc uptake transport system. In Listeria innocua serovar 6a (strain ATCC BAA-680 / CLIP 11262), this protein is Zinc uptake system ATP-binding protein ZurA (zurA).